The primary structure comprises 439 residues: ATP-dependent RNA helicase RhlB (439 aa).

The Q motif motif lies at 9-37 (QKFADLPLHPEVKQALAENGFEFCTPIQA). One can recognise a Helicase ATP-binding domain in the interval 40–219 (LPVLLQSKDI…YDHMNDPVKV (180 aa)). 53–60 (AQTGTGKT) is an ATP binding site. Positions 165-168 (DEAD) match the DEAD box motif. The Helicase C-terminal domain occupies 243–390 (KMRLLLTLIE…VSNYDRDALL (148 aa)). The segment at 395 to 439 (SPVKIHRKHPAGARNLRERSGAGRTPGAHRSGGRPPRHDRTRRQP) is disordered. A compositionally biased stretch (basic residues) spans 425 to 439 (SGGRPPRHDRTRRQP).

It belongs to the DEAD box helicase family. RhlB subfamily. In terms of assembly, component of the RNA degradosome, which is a multiprotein complex involved in RNA processing and mRNA degradation.

It localises to the cytoplasm. It catalyses the reaction ATP + H2O = ADP + phosphate + H(+). DEAD-box RNA helicase involved in RNA degradation. Has RNA-dependent ATPase activity and unwinds double-stranded RNA. This is ATP-dependent RNA helicase RhlB from Shewanella oneidensis (strain ATCC 700550 / JCM 31522 / CIP 106686 / LMG 19005 / NCIMB 14063 / MR-1).